Consider the following 393-residue polypeptide: Actin-related protein 2 (393 aa).

ATP contacts are provided by residues 158-160, 212-216, and 303-308; these read GDG, RQMKE, and GGTTMY.

The protein belongs to the actin family. ARP2 subfamily. Component of the Arp2/3 complex.

It localises to the cytoplasm. Its subcellular location is the cytoskeleton. Functions as ATP-binding component of the Arp2/3 complex which is involved in regulation of actin polymerization and together with an activating nucleation-promoting factor (NPF) mediates the formation of branched actin networks. Seems to contact the pointed end of the daughter actin filament. This is Actin-related protein 2 (arx-2) from Caenorhabditis briggsae.